Reading from the N-terminus, the 254-residue chain is Pyridoxine 5'-phosphate synthase (254 aa).

A 3-amino-2-oxopropyl phosphate-binding site is contributed by N12. 14 to 15 (DH) contributes to the 1-deoxy-D-xylulose 5-phosphate binding site. A 3-amino-2-oxopropyl phosphate-binding site is contributed by R23. The active-site Proton acceptor is H48. Residues R50 and H55 each contribute to the 1-deoxy-D-xylulose 5-phosphate site. The Proton acceptor role is filled by E75. T105 serves as a coordination point for 1-deoxy-D-xylulose 5-phosphate. The active-site Proton donor is the H199. Residues G200 and 221 to 222 (GF) contribute to the 3-amino-2-oxopropyl phosphate site.

Belongs to the PNP synthase family. As to quaternary structure, homooctamer; tetramer of dimers.

It is found in the cytoplasm. It carries out the reaction 3-amino-2-oxopropyl phosphate + 1-deoxy-D-xylulose 5-phosphate = pyridoxine 5'-phosphate + phosphate + 2 H2O + H(+). It participates in cofactor biosynthesis; pyridoxine 5'-phosphate biosynthesis; pyridoxine 5'-phosphate from D-erythrose 4-phosphate: step 5/5. Functionally, catalyzes the complicated ring closure reaction between the two acyclic compounds 1-deoxy-D-xylulose-5-phosphate (DXP) and 3-amino-2-oxopropyl phosphate (1-amino-acetone-3-phosphate or AAP) to form pyridoxine 5'-phosphate (PNP) and inorganic phosphate. This is Pyridoxine 5'-phosphate synthase from Rhodopseudomonas palustris (strain ATCC BAA-98 / CGA009).